A 318-amino-acid chain; its full sequence is Ficolin-1-B (318 aa).

The signal sequence occupies residues 1 to 19; the sequence is MTRWVQTFLLLVAVIRSYA. The 58-residue stretch at 42-99 folds into the Collagen-like domain; that stretch reads GCPGIPGVPGPQGPSGPAGAKGEKGFPGIPGKMGPTGLKGERGISGPKGQKGDKGDPG. Positions 100 to 318 constitute a Fibrinogen C-terminal domain; it reads IPVVGMAQNC…VSEIKFRPQP (219 aa). The cysteines at positions 109 and 137 are disulfide-linked. 2 N-linked (GlcNAc...) asparagine glycosylation sites follow: N205 and N222. D253 is a Ca(2+) binding site. An N-linked (GlcNAc...) asparagine glycan is attached at N254. The Ca(2+) site is built by D255 and S257. A disulfide bridge links C261 with C274. 273 to 275 contributes to the a carbohydrate binding site; the sequence is SCH. An N-linked (GlcNAc...) asparagine glycan is attached at N287.

The protein belongs to the ficolin lectin family. In terms of assembly, homotrimer. May form higher-order oligomers. In terms of processing, N-glycosylated. Expressed in peripheral blood leukocytes. Also detected at lower levels in spleen and lung.

Its subcellular location is the secreted. Functionally, may function in innate immunity through activation of the lectin complement pathway. Binds to GalNAc and GlcNAc carbohydrate moieties. This is Ficolin-1-B from Xenopus laevis (African clawed frog).